The sequence spans 229 residues: uncharacterized protein (229 aa).

The tract at residues 1–102 is disordered; it reads MKLLGRKKSY…AASKAQITDR (102 aa). A compositionally biased stretch (basic residues) spans 73–94; the sequence is ARRKSLAPPKCHRAERRAKRAA. A run of 2 helical transmembrane segments spans residues 137–157 and 159–179; these read LGLFTPSALVLLFITFGVPQL and LYMSPAMLVLLSVMGIDGIIL.

The protein localises to the cell membrane. This is an uncharacterized protein from Mycobacterium leprae (strain TN).